Consider the following 467-residue polypeptide: Stromal membrane-associated protein 1 (467 aa).

An Arf-GAP domain is found at 18 to 136 (QLILSKLLRE…KYYDKNAIAI (119 aa)). The segment at 33–56 (CADCEAKGPRWASWNIGVFICIRC) adopts a C4-type zinc-finger fold. Positions 145 to 155 (PLQPLVSSPSL) are enriched in polar residues. Disordered stretches follow at residues 145–224 (PLQP…LDGP) and 408–467 (KFGL…QLWK). 2 stretches are compositionally biased toward basic and acidic residues: residues 160–185 (DKNKLEKEKEKKKEEKKREKEPEKPA) and 192–204 (KLQKKDQQLEPKK). Residues 218–222 (LLGLD) carry the Interaction with clathrin heavy chains motif. The segment covering 413–438 (QAQQPQWSLSQMNQQMAGMSISSATP) has biased composition (polar residues). Low complexity predominate over residues 446 to 467 (SSTTAGWSGSSSGQTLSTQLWK).

Interacts with ARF6. Interacts with clathrin heavy chains via the clathrin box-like motif. In terms of tissue distribution, detected in bone marrow, adrenal gland, trachea, lymph node, spinal cord, peripheral blood leukocytes, thyroid and stomach.

The protein resides in the cell membrane. GTPase activating protein that acts on ARF6. Plays a role in clathrin-dependent endocytosis. May play a role in erythropoiesis. The polypeptide is Stromal membrane-associated protein 1 (SMAP1) (Homo sapiens (Human)).